Here is a 206-residue protein sequence, read N- to C-terminus: Small ribosomal subunit protein uS4 (206 aa).

The S4 RNA-binding domain occupies 96–156 (GRLDNVVYRM…EKSKKQARIK (61 aa)).

The protein belongs to the universal ribosomal protein uS4 family. As to quaternary structure, part of the 30S ribosomal subunit. Contacts protein S5. The interaction surface between S4 and S5 is involved in control of translational fidelity.

In terms of biological role, one of the primary rRNA binding proteins, it binds directly to 16S rRNA where it nucleates assembly of the body of the 30S subunit. Its function is as follows. With S5 and S12 plays an important role in translational accuracy. The sequence is that of Small ribosomal subunit protein uS4 from Haemophilus influenzae (strain ATCC 51907 / DSM 11121 / KW20 / Rd).